Reading from the N-terminus, the 529-residue chain is Peptide chain release factor 3 (529 aa).

One can recognise a tr-type G domain in the interval 11 to 280; the sequence is SKRRTFAIIS…SLIKWAPSPI (270 aa). Residues 20 to 27, 88 to 92, and 142 to 145 contribute to the GTP site; these read SHPDAGKT, DTPGH, and NKLD.

The protein belongs to the TRAFAC class translation factor GTPase superfamily. Classic translation factor GTPase family. PrfC subfamily.

The protein resides in the cytoplasm. Increases the formation of ribosomal termination complexes and stimulates activities of RF-1 and RF-2. It binds guanine nucleotides and has strong preference for UGA stop codons. It may interact directly with the ribosome. The stimulation of RF-1 and RF-2 is significantly reduced by GTP and GDP, but not by GMP. This Buchnera aphidicola subsp. Schizaphis graminum (strain Sg) protein is Peptide chain release factor 3.